The sequence spans 60 residues: Transcriptional regulatory protein SenN (60 aa).

Residues 11-31 (RFRKRKTFGNQILPLELLIEK) constitute a DNA-binding region (H-T-H motif).

It to B.subtilis SenS.

Regulates the expression of extracellular-protein genes of Bacillus natto. The protein is Transcriptional regulatory protein SenN (senN) of Bacillus subtilis subsp. natto.